We begin with the raw amino-acid sequence, 146 residues long: MKNEMHLEFSALSQNESFARVTVASFIAQLDPTMDELTEIKTVVSEAVTNAIIHGYEENCDGKVYISVTLEDHVVYLTIRDEGIGITDLEEARQPLFTTKPELERSGMGFTIMENFMDDVTIDSSPEMGTTIRLTKHLSKSKALCN.

This sequence belongs to the anti-sigma-factor family.

It catalyses the reaction L-seryl-[protein] + ATP = O-phospho-L-seryl-[protein] + ADP + H(+). The catalysed reaction is L-threonyl-[protein] + ATP = O-phospho-L-threonyl-[protein] + ADP + H(+). Binds to sigma F and blocks its ability to form an RNA polymerase holoenzyme (E-sigma F). Phosphorylates SpoIIAA on a serine residue. This phosphorylation may enable SpoIIAA to act as an anti-anti-sigma factor that counteracts SpoIIAB and thus releases sigma F from inhibition. In Bacillus velezensis (strain DSM 23117 / BGSC 10A6 / LMG 26770 / FZB42) (Bacillus amyloliquefaciens subsp. plantarum), this protein is Anti-sigma F factor.